Reading from the N-terminus, the 844-residue chain is Translation elongation factor 2 (844 aa).

In terms of domain architecture, tr-type G spans 17-348; the sequence is RNIRNMSVIA…MIAIHLPSPV (332 aa). Residue 26 to 33 coordinates GTP; the sequence is AHVDHGKS. 2 positions are modified to phosphothreonine: T57 and T59. GTP is bound by residues 162–165 and 219–221; these read NKMD and SGL. S488 bears the Phosphoserine mark. At H701 the chain carries Diphthamide.

It belongs to the TRAFAC class translation factor GTPase superfamily. Classic translation factor GTPase family. EF-G/EF-2 subfamily. Post-translationally, phosphorylation by EF-2 kinase completely inactivates EF-2.

It is found in the cytoplasm. It carries out the reaction GTP + H2O = GDP + phosphate + H(+). Catalyzes the GTP-dependent ribosomal translocation step during translation elongation. During this step, the ribosome changes from the pre-translocational (PRE) to the post-translocational (POST) state as the newly formed A-site-bound peptidyl-tRNA and P-site-bound deacylated tRNA move to the P and E sites, respectively. Catalyzes the coordinated movement of the two tRNA molecules, the mRNA and conformational changes in the ribosome. The protein is Translation elongation factor 2 of Bombyx mori (Silk moth).